Reading from the N-terminus, the 412-residue chain is Glutamate-pyruvate aminotransferase AlaC (412 aa).

Lysine 244 is modified (N6-(pyridoxal phosphate)lysine).

Belongs to the class-I pyridoxal-phosphate-dependent aminotransferase family. Homodimer. Pyridoxal 5'-phosphate is required as a cofactor.

The protein localises to the cytoplasm. It carries out the reaction L-alanine + 2-oxoglutarate = pyruvate + L-glutamate. It functions in the pathway amino-acid biosynthesis; L-alanine biosynthesis. Functionally, involved in the biosynthesis of alanine. Catalyzes the transamination of pyruvate by glutamate, leading to the formation of L-alanine and 2-oxoglutarate. Is also able to catalyze the reverse reaction. The chain is Glutamate-pyruvate aminotransferase AlaC from Escherichia coli (strain K12).